Reading from the N-terminus, the 291-residue chain is Serine hydrolase BPHL (291 aa).

A signal peptide spans 1 to 37; it reads MATATVRPAAQRLRLLLSPLKSRICVPQAEPVATFGT. In terms of domain architecture, AB hydrolase-1 spans 62–173; that stretch reads AILLLPGMLG…ANAYVTEEDS (112 aa). An N6-acetyllysine; alternate modification is found at Lys-74. N6-succinyllysine; alternate is present on Lys-74. N6-acetyllysine occurs at positions 86 and 119. Lys-126 is subject to N6-acetyllysine; alternate. Lys-126 carries the N6-succinyllysine; alternate modification. Residue Ser-139 is the Nucleophile of the active site. Lys-184 carries the N6-succinyllysine modification. At Lys-191 the chain carries N6-acetyllysine; alternate. Lys-191 is modified (N6-succinyllysine; alternate). Lys-217 is modified (N6-acetyllysine). A Mg(2+)-binding site is contributed by Glu-221. Lys-243 bears the N6-acetyllysine mark. The active-site Charge relay system is Asp-244. 2 positions are modified to N6-acetyllysine; alternate: Lys-260 and Lys-271. N6-succinyllysine; alternate occurs at positions 260 and 271. Catalysis depends on His-272, which acts as the Charge relay system.

This sequence belongs to the AB hydrolase superfamily. Lipase family. In terms of assembly, monomer. May also form homodimers.

It is found in the mitochondrion. It catalyses the reaction L-homocysteine thiolactone + H2O = L-homocysteine + H(+). The enzyme catalyses valacyclovir + H2O = acyclovir + L-valine + H(+). Functionally, specific alpha-amino acid ester serine hydrolase that prefers small, hydrophobic, and aromatic side chains and does not have a stringent requirement for the leaving group other than preferring a primary alcohol. Has homocysteine-thiolactonase activity (in vitro) and may play a significant role in the detoxification of homocysteine thiolactone in vivo. Catalyzes the hydrolytic activation of amino acid ester prodrugs of nucleoside analogs such as valacyclovir and valganciclovir, converting them into their active forms (acyclovir and ganciclovir). The chain is Serine hydrolase BPHL (Bphl) from Mus musculus (Mouse).